The primary structure comprises 248 residues: Ribosomal RNA small subunit methyltransferase J (248 aa).

S-adenosyl-L-methionine contacts are provided by residues 101 to 102 (RD), 117 to 118 (ER), 153 to 154 (SS), and Asp-171.

It belongs to the methyltransferase superfamily. RsmJ family.

The protein localises to the cytoplasm. The enzyme catalyses guanosine(1516) in 16S rRNA + S-adenosyl-L-methionine = N(2)-methylguanosine(1516) in 16S rRNA + S-adenosyl-L-homocysteine + H(+). In terms of biological role, specifically methylates the guanosine in position 1516 of 16S rRNA. The protein is Ribosomal RNA small subunit methyltransferase J of Serratia proteamaculans (strain 568).